Consider the following 466-residue polypeptide: Argininosuccinate lyase (466 aa).

It belongs to the lyase 1 family. Argininosuccinate lyase subfamily.

Its subcellular location is the cytoplasm. It carries out the reaction 2-(N(omega)-L-arginino)succinate = fumarate + L-arginine. Its pathway is amino-acid biosynthesis; L-arginine biosynthesis; L-arginine from L-ornithine and carbamoyl phosphate: step 3/3. This chain is Argininosuccinate lyase, found in Clostridium perfringens (strain ATCC 13124 / DSM 756 / JCM 1290 / NCIMB 6125 / NCTC 8237 / Type A).